The sequence spans 230 residues: MAVGKKLVKAREGIDREKLYAIADAIKLVKERATAKFDETIEVAINLGVDPRHADQMVRGVVTLPNGTGRTLRVGVFARGAKADEAKAAGADVVGAEDLVEIVQGGKIEFDRCIATPDMMPLVGRLGKVLGPRGMMPNPKIGTVTMDVAGAVKGAKGGSVEFRVEKAGIIQAGVGKASFSEEKLVENIKALADAVVKAKPAGAKGTYVQRVAVSSTMGPGVKVEPGSLNS.

Belongs to the universal ribosomal protein uL1 family. Part of the 50S ribosomal subunit.

Functionally, binds directly to 23S rRNA. The L1 stalk is quite mobile in the ribosome, and is involved in E site tRNA release. In terms of biological role, protein L1 is also a translational repressor protein, it controls the translation of the L11 operon by binding to its mRNA. This chain is Large ribosomal subunit protein uL1, found in Afipia carboxidovorans (strain ATCC 49405 / DSM 1227 / KCTC 32145 / OM5) (Oligotropha carboxidovorans).